The sequence spans 493 residues: EGF-containing fibulin-like extracellular matrix protein 1 (493 aa).

Positions 1–17 (MLQTLFLTMLTLALVKS) are cleaved as a signal peptide. The EGF-like 1; atypical domain maps to 26-71 (YTQCTDGYEWDPIRQQCKDIDECDIVPDACKGGMKCVNHYGGYLCL). In terms of domain architecture, EGF-like 2; calcium-binding spans 173–213 (DIDECTSGTHNCRTDQVCINLRGSFTCQCLPGYQKRGEQCV). 15 disulfides stabilise this stretch: cysteine 177/cysteine 190, cysteine 184/cysteine 199, cysteine 201/cysteine 212, cysteine 218/cysteine 228, cysteine 224/cysteine 237, cysteine 239/cysteine 252, cysteine 258/cysteine 268, cysteine 264/cysteine 277, cysteine 279/cysteine 292, cysteine 298/cysteine 309, cysteine 305/cysteine 318, cysteine 320/cysteine 332, cysteine 338/cysteine 350, cysteine 344/cysteine 359, and cysteine 365/cysteine 377. Positions 214 to 253 (DIDECTVPPYCHQRCVNTPGSFYCQCSPGFQLAANNYTCV) constitute an EGF-like 3; calcium-binding domain. N-linked (GlcNAc...) asparagine glycosylation occurs at asparagine 249. An EGF-like 4; calcium-binding domain is found at 254–293 (DINECDASNQCAQQCYNILGSFICQCNQGYELSSDRLNCE). The interval 259–493 (DASNQCAQQC…LTIIVGPFSF (235 aa)) is mediates interaction with TIMP3. The EGF-like 5; calcium-binding domain maps to 294 to 333 (DIDECRTSSYLCQYQCVNEPGKFSCMCPQGYEVVRSRTCQ). Residues 334–378 (DINECETTNECREDEMCWNYHGGFRCYPRNPCQDHYVLTSENRCV) form the EGF-like 6; calcium-binding domain.

It belongs to the fibulin family. In terms of assembly, interacts with ECM1. Interacts with TIMP3. Expressed in the eye in the ciliary body, cornea, inner nuclear layer of the retina, and in the optic disk.

It localises to the secreted. It is found in the extracellular space. The protein localises to the extracellular matrix. Binds EGFR, the EGF receptor, inducing EGFR autophosphorylation and the activation of downstream signaling pathways. May play a role in cell adhesion and migration. May function as a negative regulator of chondrocyte differentiation. In the olfactory epithelium, it may regulate glial cell migration, differentiation and the ability of glial cells to support neuronal neurite outgrowth. The protein is EGF-containing fibulin-like extracellular matrix protein 1 (Efemp1) of Mus musculus (Mouse).